The sequence spans 90 residues: Probable Fe(2+)-trafficking protein (90 aa).

This sequence belongs to the Fe(2+)-trafficking protein family.

Functionally, could be a mediator in iron transactions between iron acquisition and iron-requiring processes, such as synthesis and/or repair of Fe-S clusters in biosynthetic enzymes. The protein is Probable Fe(2+)-trafficking protein of Aeromonas salmonicida (strain A449).